A 322-amino-acid chain; its full sequence is Phosphatidylserine decarboxylase proenzyme (322 aa).

Catalysis depends on charge relay system; for autoendoproteolytic cleavage activity residues Asp90, His147, and Ser254. Ser254 functions as the Schiff-base intermediate with substrate; via pyruvic acid; for decarboxylase activity in the catalytic mechanism. A Pyruvic acid (Ser); by autocatalysis modification is found at Ser254. The disordered stretch occupies residues 297–322; it reads PAPLPAEEIKAEHDASPLVDNKKDDT. Positions 303 to 322 are enriched in basic and acidic residues; sequence EEIKAEHDASPLVDNKKDDT.

It belongs to the phosphatidylserine decarboxylase family. PSD-B subfamily. Prokaryotic type I sub-subfamily. Heterodimer of a large membrane-associated beta subunit and a small pyruvoyl-containing alpha subunit. It depends on pyruvate as a cofactor. In terms of processing, is synthesized initially as an inactive proenzyme. Formation of the active enzyme involves a self-maturation process in which the active site pyruvoyl group is generated from an internal serine residue via an autocatalytic post-translational modification. Two non-identical subunits are generated from the proenzyme in this reaction, and the pyruvate is formed at the N-terminus of the alpha chain, which is derived from the carboxyl end of the proenzyme. The autoendoproteolytic cleavage occurs by a canonical serine protease mechanism, in which the side chain hydroxyl group of the serine supplies its oxygen atom to form the C-terminus of the beta chain, while the remainder of the serine residue undergoes an oxidative deamination to produce ammonia and the pyruvoyl prosthetic group on the alpha chain. During this reaction, the Ser that is part of the protease active site of the proenzyme becomes the pyruvoyl prosthetic group, which constitutes an essential element of the active site of the mature decarboxylase.

The protein resides in the cell membrane. It catalyses the reaction a 1,2-diacyl-sn-glycero-3-phospho-L-serine + H(+) = a 1,2-diacyl-sn-glycero-3-phosphoethanolamine + CO2. It participates in phospholipid metabolism; phosphatidylethanolamine biosynthesis; phosphatidylethanolamine from CDP-diacylglycerol: step 2/2. In terms of biological role, catalyzes the formation of phosphatidylethanolamine (PtdEtn) from phosphatidylserine (PtdSer). This is Phosphatidylserine decarboxylase proenzyme from Salmonella typhi.